The primary structure comprises 159 residues: Transcriptional repressor NrdR (159 aa).

Over residues 1-11 (MQCPTCQNTDS) the composition is skewed to polar residues. The interval 1–21 (MQCPTCQNTDSRVLESRSADS) is disordered. A zinc finger lies at 3 to 34 (CPTCQNTDSRVLESRSADSGKSVRRRRECLNC). The region spanning 49–139 (VSVLKKDGSR…VYRKFNGVKD (91 aa)) is the ATP-cone domain.

Belongs to the NrdR family. Zn(2+) serves as cofactor.

Its function is as follows. Negatively regulates transcription of bacterial ribonucleotide reductase nrd genes and operons by binding to NrdR-boxes. The polypeptide is Transcriptional repressor NrdR (Prochlorococcus marinus (strain MIT 9301)).